Consider the following 378-residue polypeptide: Dihydroorotate dehydrogenase (quinone) (378 aa).

Residues 77 to 81 (AGFDK) and Thr101 each bind FMN. Lys81 provides a ligand contact to substrate. A substrate-binding site is contributed by 126–130 (NRMGF). Residues Asn158 and Asn191 each contribute to the FMN site. Asn191 lines the substrate pocket. Catalysis depends on Ser194, which acts as the Nucleophile. Residue Asn196 participates in substrate binding. FMN-binding residues include Lys229 and Thr257. Substrate is bound at residue 258 to 259 (NT). Residues Gly287, Gly316, and 337 to 338 (YT) each bind FMN.

The protein belongs to the dihydroorotate dehydrogenase family. Type 2 subfamily. Monomer. FMN is required as a cofactor.

Its subcellular location is the cell membrane. The enzyme catalyses (S)-dihydroorotate + a quinone = orotate + a quinol. It functions in the pathway pyrimidine metabolism; UMP biosynthesis via de novo pathway; orotate from (S)-dihydroorotate (quinone route): step 1/1. Functionally, catalyzes the conversion of dihydroorotate to orotate with quinone as electron acceptor. This chain is Dihydroorotate dehydrogenase (quinone), found in Synechococcus sp. (strain ATCC 27144 / PCC 6301 / SAUG 1402/1) (Anacystis nidulans).